Here is a 631-residue protein sequence, read N- to C-terminus: Altered inheritance of mitochondria protein 9, mitochondrial (631 aa).

The transit peptide at 1-41 (MLSRVVRQRSRSAISSFKLRAHAAFAETRIGVGISVQATRL) directs the protein to the mitochondrion.

It belongs to the AIM9 family.

It localises to the mitochondrion. The sequence is that of Altered inheritance of mitochondria protein 9, mitochondrial (AIM9) from Scheffersomyces stipitis (strain ATCC 58785 / CBS 6054 / NBRC 10063 / NRRL Y-11545) (Yeast).